The sequence spans 333 residues: Cytosolic sulfotransferase 10 (333 aa).

Residue 76-81 coordinates 3'-phosphoadenylyl sulfate; the sequence is KSGTTW. The active-site Proton acceptor is His-146. Residues Arg-168, Ser-176, Tyr-234, and 299-301 each bind 3'-phosphoadenylyl sulfate; that span reads RKG.

This sequence belongs to the sulfotransferase 1 family. As to expression, expressed in roots.

It localises to the cytoplasm. Its function is as follows. Sulfotransferase that utilizes 3'-phospho-5'-adenylyl sulfate (PAPS) as sulfonate donor to specifically catalyze the sulfate conjugation of brassinosteroids, including castasterone (CS), brassinolide (BL), related 24-epimers, and the naturally occurring (22R, 23R)-28-homobrassinosteroids. No activity on phenolic acids, desulfo-glucosinolates, flavonoids, steroids, gibberellic acids, cytokinins, phenylpropanoids, hydroxyjasmonates and coumarins. The polypeptide is Cytosolic sulfotransferase 10 (SOT10) (Arabidopsis thaliana (Mouse-ear cress)).